Consider the following 445-residue polypeptide: UDP-N-acetylmuramoylalanine--D-glutamate ligase (445 aa).

Gly-117–Thr-123 serves as a coordination point for ATP.

This sequence belongs to the MurCDEF family.

Its subcellular location is the cytoplasm. The catalysed reaction is UDP-N-acetyl-alpha-D-muramoyl-L-alanine + D-glutamate + ATP = UDP-N-acetyl-alpha-D-muramoyl-L-alanyl-D-glutamate + ADP + phosphate + H(+). It functions in the pathway cell wall biogenesis; peptidoglycan biosynthesis. Functionally, cell wall formation. Catalyzes the addition of glutamate to the nucleotide precursor UDP-N-acetylmuramoyl-L-alanine (UMA). This Neisseria meningitidis serogroup C (strain 053442) protein is UDP-N-acetylmuramoylalanine--D-glutamate ligase.